Consider the following 369-residue polypeptide: Aminomethyltransferase (369 aa).

Belongs to the GcvT family. The glycine cleavage system is composed of four proteins: P, T, L and H.

The enzyme catalyses N(6)-[(R)-S(8)-aminomethyldihydrolipoyl]-L-lysyl-[protein] + (6S)-5,6,7,8-tetrahydrofolate = N(6)-[(R)-dihydrolipoyl]-L-lysyl-[protein] + (6R)-5,10-methylene-5,6,7,8-tetrahydrofolate + NH4(+). In terms of biological role, the glycine cleavage system catalyzes the degradation of glycine. This Synechococcus sp. (strain CC9311) protein is Aminomethyltransferase.